The following is a 335-amino-acid chain: Phospho-N-acetylmuramoyl-pentapeptide-transferase (335 aa).

10 helical membrane-spanning segments follow: residues 3–23 (LTLIAGLISLLLTALIMPHFI), 53–73 (GGTVFLLVASFVSFLFAILFF), 78–98 (SMGLITGILAIVLIYGFIGFL), 118–138 (LSLQIVGGLIFYFLHVVPSGI), 143–163 (VFGFPVHLGLLYIFFVLFWVV), 175–195 (IDGLASISVVISLLTYSVIAI), 200–220 (YDVLLLCGIMIGALLGFFIFN), 226–246 (VFMGDVGSLALGAMLAAISIA), 251–271 (WTLLVIGLVYVFETSSVMLQV), and 314–334 (VDAFLWSVGAVSSLIVLAILY).

Belongs to the glycosyltransferase 4 family. MraY subfamily. Mg(2+) is required as a cofactor.

It localises to the cell membrane. It catalyses the reaction UDP-N-acetyl-alpha-D-muramoyl-L-alanyl-gamma-D-glutamyl-L-lysyl-D-alanyl-D-alanine + di-trans,octa-cis-undecaprenyl phosphate = Mur2Ac(oyl-L-Ala-gamma-D-Glu-L-Lys-D-Ala-D-Ala)-di-trans,octa-cis-undecaprenyl diphosphate + UMP. It participates in cell wall biogenesis; peptidoglycan biosynthesis. Its function is as follows. Catalyzes the initial step of the lipid cycle reactions in the biosynthesis of the cell wall peptidoglycan: transfers peptidoglycan precursor phospho-MurNAc-pentapeptide from UDP-MurNAc-pentapeptide onto the lipid carrier undecaprenyl phosphate, yielding undecaprenyl-pyrophosphoryl-MurNAc-pentapeptide, known as lipid I. The protein is Phospho-N-acetylmuramoyl-pentapeptide-transferase of Streptococcus uberis (strain ATCC BAA-854 / 0140J).